The following is a 464-amino-acid chain: ATP-dependent protease ATPase subunit HslU (464 aa).

ATP is bound by residues Ile-19, 61–66 (GVGKTE), Asp-277, Glu-342, and Arg-414.

This sequence belongs to the ClpX chaperone family. HslU subfamily. In terms of assembly, a double ring-shaped homohexamer of HslV is capped on each side by a ring-shaped HslU homohexamer. The assembly of the HslU/HslV complex is dependent on binding of ATP.

It localises to the cytoplasm. Functionally, ATPase subunit of a proteasome-like degradation complex; this subunit has chaperone activity. The binding of ATP and its subsequent hydrolysis by HslU are essential for unfolding of protein substrates subsequently hydrolyzed by HslV. HslU recognizes the N-terminal part of its protein substrates and unfolds these before they are guided to HslV for hydrolysis. The protein is ATP-dependent protease ATPase subunit HslU of Lactobacillus johnsonii (strain CNCM I-12250 / La1 / NCC 533).